The following is a 586-amino-acid chain: Non-structural glycoprotein GNS (586 aa).

A signal peptide spans 1 to 14; the sequence is MFLQLFNIVLIYGV. Residues 15-544 lie on the Extracellular side of the membrane; it reads RTSQSTWINY…QNKEYWNEES (530 aa). Residues asparagine 27, asparagine 68, asparagine 274, asparagine 350, asparagine 383, asparagine 476, asparagine 501, and asparagine 521 are each glycosylated (N-linked (GlcNAc...) asparagine; by host). Residues 545–562 form a helical membrane-spanning segment; it reads SIWGISTIITVLGIYYIY. The Cytoplasmic portion of the chain corresponds to 563–586; it reads RKNRREKIFLNMKHRVQRFFKLDY.

This sequence belongs to the ephemerovirus glycoprotein family.

The protein resides in the host membrane. In Bos taurus (Bovine), this protein is Non-structural glycoprotein GNS (GNS).